A 115-amino-acid polypeptide reads, in one-letter code: Cycloviolacin-O13 (115 aa).

The first 22 residues, Met1–Ala22, serve as a signal peptide directing secretion. The propeptide occupies Thr23–Asn81. Positions Gly82–Asn111 form a cross-link, cyclopeptide (Gly-Asn). Intrachain disulfides connect Cys85/Cys101, Cys89/Cys103, and Cys94/Cys108. A propeptide spanning residues Ser112–Asn115 is cleaved from the precursor.

Post-translationally, cycloviolacin-O13 is a cyclic peptide. Expressed in leaves, petals, petioles, roots and runners (at protein level).

Its function is as follows. Probably participates in a plant defense mechanism. Has hemolytic activity. The protein is Cycloviolacin-O13 of Viola odorata (Sweet violet).